We begin with the raw amino-acid sequence, 271 residues long: Chymotrypsin-like elastase family member 2A (271 aa).

The N-terminal stretch at 1–16 (MIRTLLLSALVAGALS) is a signal peptide. Residues 17–30 (CGYPTYEVEDDVSR) constitute a propeptide, activation peptide. The Peptidase S1 domain maps to 31 to 269 (VVGGQEATPN…YIDWINSVMA (239 aa)). Cys-60 and Cys-76 are disulfide-bonded. Catalysis depends on charge relay system residues His-75 and Asp-123. Cystine bridges form between Cys-157–Cys-224, Cys-188–Cys-204, and Cys-214–Cys-245. The Charge relay system role is filled by Ser-218.

The protein belongs to the peptidase S1 family. Elastase subfamily. In terms of assembly, interacts with CPA1. Interacts with SERPINA1. In terms of tissue distribution, highly expressed in pancreas (at mRNA and protein levels). Also expressed in adrenal gland and small intestine.

It is found in the secreted. It carries out the reaction Preferential cleavage: Leu-|-Xaa, Met-|-Xaa and Phe-|-Xaa. Hydrolyzes elastin.. Its function is as follows. Elastase that enhances insulin signaling and might have a physiologic role in cellular glucose metabolism. Circulates in plasma and reduces platelet hyperactivation, triggers both insulin secretion and degradation, and increases insulin sensitivity. The sequence is that of Chymotrypsin-like elastase family member 2A from Mus musculus (Mouse).